The primary structure comprises 333 residues: Protoheme IX farnesyltransferase (333 aa).

7 helical membrane passes run 63 to 83, 109 to 129, 132 to 152, 160 to 180, 188 to 208, 245 to 265, and 292 to 312; these read LACT…LNCI, AAFI…VSGV, LAAG…TAIL, IVIG…AASG, WLFA…ALLL, GFGV…LIPF, and WSIF…LPMA.

Belongs to the UbiA prenyltransferase family. Protoheme IX farnesyltransferase subfamily.

It is found in the cell inner membrane. It carries out the reaction heme b + (2E,6E)-farnesyl diphosphate + H2O = Fe(II)-heme o + diphosphate. It participates in porphyrin-containing compound metabolism; heme O biosynthesis; heme O from protoheme: step 1/1. Its function is as follows. Converts heme B (protoheme IX) to heme O by substitution of the vinyl group on carbon 2 of heme B porphyrin ring with a hydroxyethyl farnesyl side group. The sequence is that of Protoheme IX farnesyltransferase from Prochlorococcus marinus (strain MIT 9303).